The sequence spans 486 residues: Malonate-semialdehyde dehydrogenase (486 aa).

The NAD(+) site is built by Phe154, Lys178, Glu181, Arg182, and Ser231. Catalysis depends on Cys286, which acts as the Nucleophile. NAD(+) is bound at residue Glu386.

It belongs to the aldehyde dehydrogenase family. IolA subfamily. Homotetramer.

The catalysed reaction is 3-oxopropanoate + NAD(+) + CoA + H2O = hydrogencarbonate + acetyl-CoA + NADH + H(+). It carries out the reaction 2-methyl-3-oxopropanoate + NAD(+) + CoA + H2O = propanoyl-CoA + hydrogencarbonate + NADH + H(+). It functions in the pathway polyol metabolism; myo-inositol degradation into acetyl-CoA; acetyl-CoA from myo-inositol: step 7/7. In terms of biological role, catalyzes the oxidation of malonate semialdehyde (MSA) and methylmalonate semialdehyde (MMSA) into acetyl-CoA and propanoyl-CoA, respectively. Is involved in a myo-inositol catabolic pathway. Bicarbonate, and not CO2, is the end-product of the enzymatic reaction. The chain is Malonate-semialdehyde dehydrogenase from Bacillus cereus (strain G9842).